The chain runs to 320 residues: Aspartate carbamoyltransferase catalytic subunit (320 aa).

Carbamoyl phosphate contacts are provided by Arg57 and Thr58. Lys85 contacts L-aspartate. Carbamoyl phosphate-binding residues include Arg107, His141, and Gln144. Arg174 and Arg228 together coordinate L-aspartate. Positions 269 and 270 each coordinate carbamoyl phosphate.

The protein belongs to the aspartate/ornithine carbamoyltransferase superfamily. ATCase family. As to quaternary structure, heterododecamer (2C3:3R2) of six catalytic PyrB chains organized as two trimers (C3), and six regulatory PyrI chains organized as three dimers (R2).

It carries out the reaction carbamoyl phosphate + L-aspartate = N-carbamoyl-L-aspartate + phosphate + H(+). It participates in pyrimidine metabolism; UMP biosynthesis via de novo pathway; (S)-dihydroorotate from bicarbonate: step 2/3. In terms of biological role, catalyzes the condensation of carbamoyl phosphate and aspartate to form carbamoyl aspartate and inorganic phosphate, the committed step in the de novo pyrimidine nucleotide biosynthesis pathway. The sequence is that of Aspartate carbamoyltransferase catalytic subunit from Mycobacterium ulcerans (strain Agy99).